The sequence spans 78 residues: Large ribosomal subunit protein bL28 (78 aa).

The interval 1-28 (MSAYCQVTGRKPGFGKQVSHSHRHTSRR) is disordered.

Belongs to the bacterial ribosomal protein bL28 family.

This Corynebacterium urealyticum (strain ATCC 43042 / DSM 7109) protein is Large ribosomal subunit protein bL28.